A 256-amino-acid chain; its full sequence is Phosphomannomutase (256 aa).

Asp12 acts as the Nucleophile in catalysis. Mg(2+) contacts are provided by Asp12 and Asp14. The active-site Proton donor/acceptor is the Asp14. The alpha-D-mannose 1-phosphate site is built by Arg21, Arg123, Arg134, Arg141, Ser179, and Asp181. Position 209 (Asp209) interacts with Mg(2+).

Belongs to the eukaryotic PMM family. As to quaternary structure, homodimer.

The protein resides in the cytoplasm. It carries out the reaction alpha-D-mannose 1-phosphate = D-mannose 6-phosphate. It functions in the pathway nucleotide-sugar biosynthesis; GDP-alpha-D-mannose biosynthesis; alpha-D-mannose 1-phosphate from D-fructose 6-phosphate: step 2/2. Its function is as follows. Involved in the synthesis of the GDP-mannose and dolichol-phosphate-mannose required for a number of critical mannosyl transfer reactions. This Encephalitozoon cuniculi (strain GB-M1) (Microsporidian parasite) protein is Phosphomannomutase (SEC53).